Reading from the N-terminus, the 150-residue chain is Lipoprotein signal peptidase (150 aa).

The next 3 membrane-spanning stretches (helical) occupy residues 5–25, 59–79, and 83–103; these read LSLV…NWVV, QQWF…WFLW, and GQNW…GNFI. Active-site residues include Asp113 and Asp129. The helical transmembrane segment at 124-144 threads the bilayer; that stretch reads IFNIADILLSVGFVVLFIAIL.

This sequence belongs to the peptidase A8 family.

It localises to the cell membrane. It carries out the reaction Release of signal peptides from bacterial membrane prolipoproteins. Hydrolyzes -Xaa-Yaa-Zaa-|-(S,diacylglyceryl)Cys-, in which Xaa is hydrophobic (preferably Leu), and Yaa (Ala or Ser) and Zaa (Gly or Ala) have small, neutral side chains.. It participates in protein modification; lipoprotein biosynthesis (signal peptide cleavage). Its function is as follows. This protein specifically catalyzes the removal of signal peptides from prolipoproteins. The sequence is that of Lipoprotein signal peptidase from Lactococcus lactis subsp. cremoris (strain MG1363).